The chain runs to 427 residues: Enolase (427 aa).

Residue Gln163 coordinates (2R)-2-phosphoglycerate. Glu205 serves as the catalytic Proton donor. Mg(2+) contacts are provided by Asp242, Glu285, and Asp312. (2R)-2-phosphoglycerate is bound by residues Lys337, Arg366, Ser367, and Lys388. The active-site Proton acceptor is the Lys337.

It belongs to the enolase family. It depends on Mg(2+) as a cofactor.

The protein localises to the cytoplasm. It localises to the secreted. Its subcellular location is the cell surface. The enzyme catalyses (2R)-2-phosphoglycerate = phosphoenolpyruvate + H2O. Its pathway is carbohydrate degradation; glycolysis; pyruvate from D-glyceraldehyde 3-phosphate: step 4/5. Its function is as follows. Catalyzes the reversible conversion of 2-phosphoglycerate (2-PG) into phosphoenolpyruvate (PEP). It is essential for the degradation of carbohydrates via glycolysis. The polypeptide is Enolase (Nitrobacter hamburgensis (strain DSM 10229 / NCIMB 13809 / X14)).